Consider the following 547-residue polypeptide: MSLVESPPWQALKSKYQELSSLHMRDFFAQDKKRGTRLSLEAAGLYFDYSKNRVDEKTIDLLCESANACNLPLRIEQLFSGKLTNESGEMVGFHTALRQVNNFSFKTNNNAIQEIHASWEKIKKLSIRIREGDYKGFTNKSITDIVNIGIGGSSLGPQMAYNALKPYVKAPLRCHFISNLDDTDFYETVRTLNPETTLFIITSKTFTTKETLENERRATEWLMQAAKKENLIQTHFMAVTAAPEKAHEFGIQKDNIFMLWPWVGGRFSVWSAAGLSLAIAIGWEEFFEFLRGAHAMDTHFRQAEFNKNMPILLALLSIWYINFFHAKTQAIIPYSQRLVYLPDYLTQLHMESLGKSVQLDGSAVHWQTGAVVWGDLGTNSQHSFHQLFLQGTMVIPVDFIAVLKNSRESHWQLPLIANCLGQSQTLMEGYDKEGVMRDLINQGIEHEKAEKLATYRLIRGNNPSNTIILEELNPYSLGSLLALYEHKVYVQSVIWNINPFDQWGVERGKHLAKDILQALQAETDQSSFDSSTERLINYVLKIKGNRP.

Glutamate 351 functions as the Proton donor in the catalytic mechanism. Active-site residues include histidine 382 and lysine 509.

The protein belongs to the GPI family.

The protein localises to the cytoplasm. It carries out the reaction alpha-D-glucose 6-phosphate = beta-D-fructose 6-phosphate. It participates in carbohydrate biosynthesis; gluconeogenesis. Its pathway is carbohydrate degradation; glycolysis; D-glyceraldehyde 3-phosphate and glycerone phosphate from D-glucose: step 2/4. Its function is as follows. Catalyzes the reversible isomerization of glucose-6-phosphate to fructose-6-phosphate. This chain is Glucose-6-phosphate isomerase, found in Coxiella burnetii (strain CbuK_Q154) (Coxiella burnetii (strain Q154)).